The following is a 214-amino-acid chain: Dephospho-CoA kinase (214 aa).

Residues Ile-4–Lys-204 form the DPCK domain. Gly-12–Thr-17 provides a ligand contact to ATP.

Belongs to the CoaE family.

It is found in the cytoplasm. The enzyme catalyses 3'-dephospho-CoA + ATP = ADP + CoA + H(+). It participates in cofactor biosynthesis; coenzyme A biosynthesis; CoA from (R)-pantothenate: step 5/5. Catalyzes the phosphorylation of the 3'-hydroxyl group of dephosphocoenzyme A to form coenzyme A. The protein is Dephospho-CoA kinase of Mannheimia succiniciproducens (strain KCTC 0769BP / MBEL55E).